A 196-amino-acid polypeptide reads, in one-letter code: MTTILRIDSSIKGEAAVSRRLTQRILDRLLEAHPDATVVSRDLAQGIRQIDGSWLGSVFTAPEQRTADQQEIARTADAVMAEVKEADILVIALPVYNFGAPAQLKSWVDHIARRGESFVYTETGPVGLLTGKRAIVAFTSDGTPLGSELDHASGWLRQVLGFVGITDVDFVAADRMVFGADEAMARAEAAVAALAA.

Ser-10 is an FMN binding site.

It belongs to the azoreductase type 1 family. Homodimer. The cofactor is FMN.

It carries out the reaction 2 a quinone + NADH + H(+) = 2 a 1,4-benzosemiquinone + NAD(+). The enzyme catalyses N,N-dimethyl-1,4-phenylenediamine + anthranilate + 2 NAD(+) = 2-(4-dimethylaminophenyl)diazenylbenzoate + 2 NADH + 2 H(+). Its function is as follows. Quinone reductase that provides resistance to thiol-specific stress caused by electrophilic quinones. Functionally, also exhibits azoreductase activity. Catalyzes the reductive cleavage of the azo bond in aromatic azo compounds to the corresponding amines. The chain is FMN-dependent NADH:quinone oxidoreductase from Cereibacter sphaeroides (strain KD131 / KCTC 12085) (Rhodobacter sphaeroides).